A 483-amino-acid polypeptide reads, in one-letter code: Regulatory protein ViaA (483 aa).

It belongs to the ViaA family. Homodimer. Interacts with RavA.

The protein localises to the cytoplasm. Its function is as follows. Component of the RavA-ViaA chaperone complex, which may act on the membrane to optimize the function of some of the respiratory chains. ViaA stimulates the ATPase activity of RavA. This is Regulatory protein ViaA from Escherichia coli O6:K15:H31 (strain 536 / UPEC).